A 518-amino-acid chain; its full sequence is WEB family protein At2g40480 (518 aa).

2 coiled-coil regions span residues 95–141 (DIKR…LQQE) and 188–219 (DNLV…AKLT). Residues 303–337 (NGESQDDDSEFCFPEPPRSPVTPRGLRIDNDFSTD) are disordered. The segment covering 328–337 (LRIDNDFSTD) has biased composition (basic and acidic residues). Residues 344–375 (ILKKLEEATEGVKQSKQALEAALNRVEIANVK) are a coiled coil.

Belongs to the WEB family.

The protein is WEB family protein At2g40480 of Arabidopsis thaliana (Mouse-ear cress).